Consider the following 287-residue polypeptide: Phosphatidylserine decarboxylase proenzyme (287 aa).

Catalysis depends on charge relay system; for autoendoproteolytic cleavage activity residues Asp-90, His-147, and Ser-253. The Schiff-base intermediate with substrate; via pyruvic acid; for decarboxylase activity role is filled by Ser-253. Position 253 is a pyruvic acid (Ser); by autocatalysis (Ser-253).

The protein belongs to the phosphatidylserine decarboxylase family. PSD-B subfamily. Prokaryotic type I sub-subfamily. As to quaternary structure, heterodimer of a large membrane-associated beta subunit and a small pyruvoyl-containing alpha subunit. Requires pyruvate as cofactor. Post-translationally, is synthesized initially as an inactive proenzyme. Formation of the active enzyme involves a self-maturation process in which the active site pyruvoyl group is generated from an internal serine residue via an autocatalytic post-translational modification. Two non-identical subunits are generated from the proenzyme in this reaction, and the pyruvate is formed at the N-terminus of the alpha chain, which is derived from the carboxyl end of the proenzyme. The autoendoproteolytic cleavage occurs by a canonical serine protease mechanism, in which the side chain hydroxyl group of the serine supplies its oxygen atom to form the C-terminus of the beta chain, while the remainder of the serine residue undergoes an oxidative deamination to produce ammonia and the pyruvoyl prosthetic group on the alpha chain. During this reaction, the Ser that is part of the protease active site of the proenzyme becomes the pyruvoyl prosthetic group, which constitutes an essential element of the active site of the mature decarboxylase.

It is found in the cell membrane. It carries out the reaction a 1,2-diacyl-sn-glycero-3-phospho-L-serine + H(+) = a 1,2-diacyl-sn-glycero-3-phosphoethanolamine + CO2. It participates in phospholipid metabolism; phosphatidylethanolamine biosynthesis; phosphatidylethanolamine from CDP-diacylglycerol: step 2/2. Functionally, catalyzes the formation of phosphatidylethanolamine (PtdEtn) from phosphatidylserine (PtdSer). This Aliivibrio fischeri (strain MJ11) (Vibrio fischeri) protein is Phosphatidylserine decarboxylase proenzyme.